A 149-amino-acid chain; its full sequence is Ribonuclease VapC2 (149 aa).

A PINc domain is found at Ile11–Ile149. Mg(2+) contacts are provided by Asp14 and Asp116.

It belongs to the PINc/VapC protein family. It depends on Mg(2+) as a cofactor.

Toxic component of a type II toxin-antitoxin (TA) system. An RNase. Its cognate antitoxin is VapB2. The polypeptide is Ribonuclease VapC2 (Methanocaldococcus jannaschii (strain ATCC 43067 / DSM 2661 / JAL-1 / JCM 10045 / NBRC 100440) (Methanococcus jannaschii)).